The chain runs to 271 residues: Mannosyl-3-phosphoglycerate phosphatase (271 aa).

Aspartate 13 acts as the Nucleophile in catalysis. 3 residues coordinate Mg(2+): aspartate 13, aspartate 15, and aspartate 214.

This sequence belongs to the HAD-like hydrolase superfamily. MPGP family. Mg(2+) serves as cofactor.

The protein localises to the cytoplasm. The enzyme catalyses 2-O-(alpha-D-mannosyl)-3-phosphoglycerate + H2O = (2R)-2-O-(alpha-D-mannosyl)-glycerate + phosphate. The chain is Mannosyl-3-phosphoglycerate phosphatase (yedP) from Escherichia coli O6:H1 (strain CFT073 / ATCC 700928 / UPEC).